The chain runs to 342 residues: S-adenosylmethionine:tRNA ribosyltransferase-isomerase (342 aa).

Belongs to the QueA family. Monomer.

The protein localises to the cytoplasm. The enzyme catalyses 7-aminomethyl-7-carbaguanosine(34) in tRNA + S-adenosyl-L-methionine = epoxyqueuosine(34) in tRNA + adenine + L-methionine + 2 H(+). Its pathway is tRNA modification; tRNA-queuosine biosynthesis. Transfers and isomerizes the ribose moiety from AdoMet to the 7-aminomethyl group of 7-deazaguanine (preQ1-tRNA) to give epoxyqueuosine (oQ-tRNA). In Streptococcus sanguinis (strain SK36), this protein is S-adenosylmethionine:tRNA ribosyltransferase-isomerase.